The primary structure comprises 402 residues: Putative cystathionine beta-lyase (402 aa).

Residue Lys-236 is modified to N6-(pyridoxal phosphate)lysine.

This sequence belongs to the class-II pyridoxal-phosphate-dependent aminotransferase family. MalY/PatB cystathionine beta-lyase subfamily. Pyridoxal 5'-phosphate is required as a cofactor.

It carries out the reaction L,L-cystathionine + H2O = L-homocysteine + pyruvate + NH4(+). The enzyme catalyses an S-substituted L-cysteine + H2O = a thiol + pyruvate + NH4(+). It functions in the pathway amino-acid biosynthesis; L-methionine biosynthesis via de novo pathway; L-homocysteine from L-cystathionine: step 1/1. This Mycobacterium leprae (strain TN) protein is Putative cystathionine beta-lyase.